We begin with the raw amino-acid sequence, 225 residues long: Riboflavin kinase (225 aa).

The unknown stretch occupies residues methionine 1–threonine 89. Residues leucine 90 to lysine 225 form a riboflavin kinase region. Glycine 99–glutamine 104 is a binding site for CDP. Mg(2+) contacts are provided by threonine 128 and asparagine 130. FMN contacts are provided by threonine 185 and glutamate 193. Residue valine 198–arginine 201 coordinates CDP.

It belongs to the archaeal riboflavin kinase family. The cofactor is Mg(2+).

The catalysed reaction is riboflavin + CTP = CDP + FMN + H(+). It participates in cofactor biosynthesis; FMN biosynthesis; FMN from riboflavin (CTP route): step 1/1. Catalyzes the CTP-dependent phosphorylation of riboflavin (vitamin B2) to form flavin mononucleotide (FMN). The polypeptide is Riboflavin kinase (ribK) (Methanosarcina mazei (strain ATCC BAA-159 / DSM 3647 / Goe1 / Go1 / JCM 11833 / OCM 88) (Methanosarcina frisia)).